The chain runs to 1262 residues: Cytoplasmic FMR1-interacting protein homolog (1262 aa).

The interval 519-550 is disordered; that stretch reads LNRMTDVKGKKKSSAPKGDSANSSSSDIRIPR.

This sequence belongs to the CYFIP family. Interacts with gex-3.

The protein resides in the cytoplasm. Its function is as follows. Required for initial steps of body morphogenesis. May play a role in egg laying and yolk protein clatherin-mediated endocytosis by oocytes during oogenesis. Plays a role in the formation of muscle connections, also called muscle arm extensions, between the body wall and the motor axons in the dorsal and ventral cord. This Caenorhabditis elegans protein is Cytoplasmic FMR1-interacting protein homolog.